The primary structure comprises 546 residues: Putative serine hydroxymethyltransferase, mitochondrial (546 aa).

The N-terminal 64 residues, 1–64 (MSSFQSTAAV…RFSSSSIAND (64 aa)), are a transit peptide targeting the mitochondrion. Lys-305 bears the N6-(pyridoxal phosphate)lysine mark.

Belongs to the SHMT family. As to quaternary structure, homotetramer. Pyridoxal 5'-phosphate is required as a cofactor.

It localises to the mitochondrion. The catalysed reaction is (6R)-5,10-methylene-5,6,7,8-tetrahydrofolate + glycine + H2O = (6S)-5,6,7,8-tetrahydrofolate + L-serine. It functions in the pathway one-carbon metabolism; tetrahydrofolate interconversion. Functionally, interconversion of serine and glycine. In Neurospora crassa (strain ATCC 24698 / 74-OR23-1A / CBS 708.71 / DSM 1257 / FGSC 987), this protein is Putative serine hydroxymethyltransferase, mitochondrial (cbs-2).